Consider the following 209-residue polypeptide: Large ribosomal subunit protein uL3 (209 aa).

Residues 124 to 156 (KRHNFSGGQRTHGQSDRQRAPGSVGGSSDPSRV) form a disordered region.

The protein belongs to the universal ribosomal protein uL3 family. In terms of assembly, part of the 50S ribosomal subunit. Forms a cluster with proteins L14 and L19.

One of the primary rRNA binding proteins, it binds directly near the 3'-end of the 23S rRNA, where it nucleates assembly of the 50S subunit. This chain is Large ribosomal subunit protein uL3, found in Pelodictyon phaeoclathratiforme (strain DSM 5477 / BU-1).